The chain runs to 637 residues: 1-deoxy-D-xylulose-5-phosphate synthase (637 aa).

Thiamine diphosphate-binding positions include His-76 and 117–119 (GHS). Residue Asp-148 coordinates Mg(2+). Residues 149-150 (GA), Asn-177, Tyr-294, and Glu-381 contribute to the thiamine diphosphate site. Asn-177 contributes to the Mg(2+) binding site.

The protein belongs to the transketolase family. DXPS subfamily. Homodimer. Mg(2+) serves as cofactor. Requires thiamine diphosphate as cofactor.

It carries out the reaction D-glyceraldehyde 3-phosphate + pyruvate + H(+) = 1-deoxy-D-xylulose 5-phosphate + CO2. Its pathway is metabolic intermediate biosynthesis; 1-deoxy-D-xylulose 5-phosphate biosynthesis; 1-deoxy-D-xylulose 5-phosphate from D-glyceraldehyde 3-phosphate and pyruvate: step 1/1. Catalyzes the acyloin condensation reaction between C atoms 2 and 3 of pyruvate and glyceraldehyde 3-phosphate to yield 1-deoxy-D-xylulose-5-phosphate (DXP). The polypeptide is 1-deoxy-D-xylulose-5-phosphate synthase (Neisseria meningitidis serogroup B (strain ATCC BAA-335 / MC58)).